Here is a 314-residue protein sequence, read N- to C-terminus: Ecto-ADP-ribosyltransferase 4 (314 aa).

The signal sequence occupies residues 1–46; sequence MGPLINRCKKILLPTTVPPATMRIWLLGGLLPFLLLLSGLQRPTEG. 2 disulfides stabilise this stretch: C69-C280 and C182-C231. A TR mART core domain is found at 91–276; the sequence is KNYFRMWQKA…LQLRSTGNLS (186 aa). N114 carries an N-linked (GlcNAc...) asparagine glycan. Position 126 (Y126) interacts with NAD(+). N178 carries an N-linked (GlcNAc...) asparagine glycan. Q206 lines the NAD(+) pocket. N222 carries an N-linked (GlcNAc...) asparagine glycan. NAD(+) is bound at residue S240. Residues N257 and N274 are each glycosylated (N-linked (GlcNAc...) asparagine). The GPI-anchor amidated alanine moiety is linked to residue A285. A propeptide spans 286-314 (removed in mature form); sequence SSKKCIPDPIAIASLSFLTSVIIFSKSRV.

Belongs to the Arg-specific ADP-ribosyltransferase family. Expressed in spleen and T-cells.

It localises to the cell membrane. It catalyses the reaction L-arginyl-[protein] + NAD(+) = N(omega)-(ADP-D-ribosyl)-L-arginyl-[protein] + nicotinamide + H(+). This Homo sapiens (Human) protein is Ecto-ADP-ribosyltransferase 4 (ART4).